A 346-amino-acid polypeptide reads, in one-letter code: L-glyceraldehyde 3-phosphate reductase (346 aa).

Residues W33, D61, Y66, S168, Q193, T223, L225, Q227, K233, S303, Q307, and N311 each contribute to the NADP(+) site.

It belongs to the shaker potassium channel beta subunit family. Homotetramer. Homooctamer.

The catalysed reaction is a primary alcohol + NADP(+) = an aldehyde + NADPH + H(+). It carries out the reaction hydroxyacetone + NADP(+) = methylglyoxal + NADPH + H(+). Its function is as follows. Aldo-keto reductase that catalyzes the stereospecific, NADPH-dependent reduction of L-glyceraldehyde 3-phosphate (L-GAP) to L-glycerol 3-phosphate (L-G3P). The physiological role of Gpr is the detoxification of L-GAP, which may be formed via non-enzymatic and/or enzymatic racemization of D-GAP. Also contributes to cellular methylglyoxal detoxification by catalyzing the NADPH-dependent conversion of methylglyoxal to acetol. However, the catalytic efficiency of methylglyoxal reductase activity is more than 2 orders of magnitude lower than the L-GAP reductase activity. In addition, exhibits activity with glyoxal and probably plays a significant role in detoxification of glyoxal in vivo. Shows broad specificity and can use aromatic aldehydes such as 4-nitrobenzaldehyde and benzaldehyde, D,L-glyceraldehyde, phenylglyoxal, isatin and the model substrate 4-nitrobenzaldehyde. In Escherichia coli (strain K12), this protein is L-glyceraldehyde 3-phosphate reductase.